The chain runs to 231 residues: Cell cycle transcriptional regulator CtrA (231 aa).

One can recognise a Response regulatory domain in the interval 2–116 (RVLLIEDDSA…EMIARIHAVV (115 aa)). Asp51 carries the 4-aspartylphosphate modification. Residues 124 to 223 (QSVIKTGDIV…VWGRGYVLRD (100 aa)) constitute a DNA-binding region (ompR/PhoB-type).

Phosphorylated by CckA.

Functionally, forms part of a two-component regulatory system CtrA/CckA that controls multiple events in the cell cycle, including cell division, stalk synthesis and cell cycle-specific transcription. Binds to a group of cell cycle-regulated promoters critical for DNA replication, DNA methylation, and class II flagellar biogenesis. The polypeptide is Cell cycle transcriptional regulator CtrA (ctrA) (Caulobacter vibrioides (strain ATCC 19089 / CIP 103742 / CB 15) (Caulobacter crescentus)).